Here is a 207-residue protein sequence, read N- to C-terminus: Guanylate kinase (207 aa).

A Guanylate kinase-like domain is found at 4 to 184 (GTLYIVSAPS…ALTDLKTIIR (181 aa)). Residue 11–18 (APSGAGKS) participates in ATP binding.

This sequence belongs to the guanylate kinase family.

It is found in the cytoplasm. It carries out the reaction GMP + ATP = GDP + ADP. In terms of biological role, essential for recycling GMP and indirectly, cGMP. This is Guanylate kinase from Escherichia coli O157:H7.